The chain runs to 1940 residues: Myosin-3 (1940 aa).

A Myosin N-terminal SH3-like domain is found at 33–82; sequence DAKTYCFVVDSKEEYVKGKIKSSQDGKVTVETEDSRTLVVKPEDVYAMNP. Positions 86–779 constitute a Myosin motor domain; it reads DKIEDMAMLT…LLGTLEEMRD (694 aa). N6,N6,N6-trimethyllysine is present on lysine 130. ATP is bound at residue 179-186; it reads GESGAGKT. 2 actin-binding regions span residues 656 to 678 and 758 to 772; these read LNKL…IPNE and KFGH…GLLG. One can recognise an IQ domain in the interval 782-811; sequence LAKLITRTQAVCRGFLMRVEFQKMMQRRES. The stretch at 841–1928 forms a coiled coil; the sequence is LKSAETEKEM…NKLRAKTRDF (1088 aa). Positions 1260–1289 are disordered; sequence ARGKNEEMQRSLSELTTQKSRLQTEAGELS. Positions 1269–1282 are enriched in polar residues; sequence RSLSELTTQKSRLQ.

It belongs to the TRAFAC class myosin-kinesin ATPase superfamily. Myosin family. As to quaternary structure, muscle myosin is a hexameric protein that consists of 2 heavy chain subunits (MHC), 2 alkali light chain subunits (MLC) and 2 regulatory light chain subunits (MLC-2).

The protein resides in the cytoplasm. The protein localises to the myofibril. Muscle contraction. This is Myosin-3 (Myh3) from Mus musculus (Mouse).